The primary structure comprises 100 residues: Ferredoxin-2 (100 aa).

The 2Fe-2S ferredoxin-type domain occupies 4 to 97 (YKVTLINEEE…DCTIMTHQES (94 aa)). [2Fe-2S] cluster is bound by residues Cys42, Cys47, Cys50, and Cys81.

This sequence belongs to the 2Fe2S plant-type ferredoxin family. The cofactor is [2Fe-2S] cluster.

Ferredoxins are iron-sulfur proteins that transfer electrons in a wide variety of metabolic reactions. This Aphanothece sacrum protein is Ferredoxin-2.